A 187-amino-acid polypeptide reads, in one-letter code: Large ribosomal subunit protein uL5 (187 aa).

This sequence belongs to the universal ribosomal protein uL5 family. Part of the 50S ribosomal subunit; part of the 5S rRNA/L5/L18/L25 subcomplex. Contacts the 5S rRNA and the P site tRNA. Forms a bridge to the 30S subunit in the 70S ribosome.

This is one of the proteins that bind and probably mediate the attachment of the 5S RNA into the large ribosomal subunit, where it forms part of the central protuberance. In the 70S ribosome it contacts protein S13 of the 30S subunit (bridge B1b), connecting the 2 subunits; this bridge is implicated in subunit movement. Contacts the P site tRNA; the 5S rRNA and some of its associated proteins might help stabilize positioning of ribosome-bound tRNAs. This Saccharopolyspora erythraea (strain ATCC 11635 / DSM 40517 / JCM 4748 / NBRC 13426 / NCIMB 8594 / NRRL 2338) protein is Large ribosomal subunit protein uL5.